We begin with the raw amino-acid sequence, 333 residues long: Probable tRNA pseudouridine synthase B (333 aa).

The segment covering 1–14 has biased composition (basic and acidic residues); the sequence is MKCPSREVFSKFEE. Residues 1–27 are disordered; the sequence is MKCPSREVFSKFEESTNPQWGKPPSQR. The active-site Nucleophile is the aspartate 71. The PUA domain maps to 238–313; sequence LPKIWVRDSA…LVARTDRVVM (76 aa).

It belongs to the pseudouridine synthase TruB family. Type 2 subfamily.

The enzyme catalyses uridine(55) in tRNA = pseudouridine(55) in tRNA. Functionally, could be responsible for synthesis of pseudouridine from uracil-55 in the psi GC loop of transfer RNAs. The chain is Probable tRNA pseudouridine synthase B from Pyrobaculum aerophilum (strain ATCC 51768 / DSM 7523 / JCM 9630 / CIP 104966 / NBRC 100827 / IM2).